The following is an 89-amino-acid chain: Small ribosomal subunit protein uS15 (89 aa).

This sequence belongs to the universal ribosomal protein uS15 family. In terms of assembly, part of the 30S ribosomal subunit. Forms a bridge to the 50S subunit in the 70S ribosome, contacting the 23S rRNA.

Its function is as follows. One of the primary rRNA binding proteins, it binds directly to 16S rRNA where it helps nucleate assembly of the platform of the 30S subunit by binding and bridging several RNA helices of the 16S rRNA. In terms of biological role, forms an intersubunit bridge (bridge B4) with the 23S rRNA of the 50S subunit in the ribosome. This chain is Small ribosomal subunit protein uS15, found in Chlorobium luteolum (strain DSM 273 / BCRC 81028 / 2530) (Pelodictyon luteolum).